The following is a 443-amino-acid chain: Serine/threonine-protein phosphatase 2A 55 kDa regulatory subunit B beta isoform (443 aa).

7 WD repeats span residues 22–61, 87–128, 171–209, 220–260, 279–317, 334–375, and 410–443; these read TEAD…KNQP, EIEE…KRPE, AHTY…RSFN, ELTE…LCDR, EIIS…RPIE, ENDC…DVTL, and DFSK…DKVN.

The protein belongs to the phosphatase 2A regulatory subunit B family. PP2A consists of a common heterodimeric core enzyme, composed of a 36 kDa catalytic subunit (subunit C) and a 65 kDa constant regulatory subunit (PR65 or subunit A), that associates with a variety of regulatory subunits.

It is found in the cytoplasm. It localises to the cytoskeleton. Its subcellular location is the membrane. The B regulatory subunit might modulate substrate selectivity and catalytic activity, and might also direct the localization of the catalytic enzyme to a particular subcellular compartment. Negatively controls the initiation of oocyte maturation. In Xenopus tropicalis (Western clawed frog), this protein is Serine/threonine-protein phosphatase 2A 55 kDa regulatory subunit B beta isoform (ppp2r2b).